Consider the following 726-residue polypeptide: WD repeat-containing and planar cell polarity effector protein fritz homolog (726 aa).

WD repeat units lie at residues 305-343 (LRSK…TLLA) and 344-383 (QAEL…INIQ). Polar residues predominate over residues 642-660 (SSGSTPKHTIQQKIPNGPS). Residues 642–717 (SSGSTPKHTI…RRQDTEDVGS (76 aa)) are disordered. Residues 672-685 (MEETEEEEEEEEEA) are compositionally biased toward acidic residues. Basic and acidic residues predominate over residues 701 to 712 (GELREDHRRQDT).

Belongs to the WD repeat fritz family. In terms of assembly, component of the CPLANE (ciliogenesis and planar polarity effectors) complex, composed of INTU, FUZ and WDPCP. Interacts with CPLANE1.

The protein resides in the cell membrane. The protein localises to the cytoplasm. Its subcellular location is the cytoskeleton. It localises to the cilium axoneme. It is found in the cilium basal body. Probable effector of the planar cell polarity signaling pathway which regulates the septin cytoskeleton in both ciliogenesis and collective cell movements. Together with FUZ and WDPCP proposed to function as core component of the CPLANE (ciliogenesis and planar polarity effectors) complex involved in the recruitment of peripheral IFT-A proteins to basal bodies. Binds phosphatidylinositol 3-phosphate with highest affinity, followed by phosphatidylinositol 4-phosphate and phosphatidylinositol 5-phosphate. The sequence is that of WD repeat-containing and planar cell polarity effector protein fritz homolog (Wdpcp) from Rattus norvegicus (Rat).